The chain runs to 232 residues: Probable GTP-binding protein EngB (232 aa).

In terms of domain architecture, EngB-type G spans 13-188; the sequence is IGLEVAFAGR…AGVMGNWYEY (176 aa). GTP contacts are provided by residues 21-28, 48-52, 67-70, 134-137, and 167-169; these read GRSNAGKS, GRTQM, DLPG, TKAD, and FSA. Mg(2+) is bound by residues Ser28 and Thr50.

This sequence belongs to the TRAFAC class TrmE-Era-EngA-EngB-Septin-like GTPase superfamily. EngB GTPase family. The cofactor is Mg(2+).

Necessary for normal cell division and for the maintenance of normal septation. The protein is Probable GTP-binding protein EngB of Psychrobacter arcticus (strain DSM 17307 / VKM B-2377 / 273-4).